A 193-amino-acid polypeptide reads, in one-letter code: Selenate reductase assembly chaperone protein (193 aa).

It belongs to the type II DMSO reductase enzyme chaperone family.

It localises to the cytoplasm. May function as a system-specific chaperone protein essential for the assembly of an active selenate reductase SerABC. The chain is Selenate reductase assembly chaperone protein from Thauera selenatis.